Consider the following 242-residue polypeptide: Small ribosomal subunit protein uS3 (242 aa).

Residues 39 to 110 (IRRFIHKKYG…QVRINVVEVE (72 aa)) enclose the KH type-2 domain. The tract at residues 217 to 242 (TMPVGASPRRRGNRRPQQFEDRSNEG) is disordered. A compositionally biased stretch (basic and acidic residues) spans 233–242 (QQFEDRSNEG).

Belongs to the universal ribosomal protein uS3 family. In terms of assembly, part of the 30S ribosomal subunit. Forms a tight complex with proteins S10 and S14.

Functionally, binds the lower part of the 30S subunit head. Binds mRNA in the 70S ribosome, positioning it for translation. In Prochlorococcus marinus (strain MIT 9313), this protein is Small ribosomal subunit protein uS3.